Reading from the N-terminus, the 141-residue chain is Hemoglobin subunit alpha (141 aa).

In terms of domain architecture, Globin spans 1 to 141 (VLSPADKTNV…VSTVLTSKYR (141 aa)). Residue serine 3 is modified to Phosphoserine. Lysine 7 bears the N6-succinyllysine mark. Threonine 8 bears the Phosphothreonine mark. Residue lysine 11 is modified to N6-succinyllysine. An N6-acetyllysine; alternate modification is found at lysine 16. Lysine 16 is subject to N6-succinyllysine; alternate. Phosphotyrosine is present on tyrosine 24. Position 35 is a phosphoserine (serine 35). Residue lysine 40 is modified to N6-succinyllysine. Position 49 is a phosphoserine (serine 49). Residue histidine 58 coordinates O2. Histidine 87 contacts heme b. Serine 102 carries the phosphoserine modification. Residue threonine 108 is modified to Phosphothreonine. Serine 124 bears the Phosphoserine mark. Threonine 134 and threonine 137 each carry phosphothreonine. At serine 138 the chain carries Phosphoserine.

This sequence belongs to the globin family. In terms of assembly, heterotetramer of two alpha chains and two beta chains. As to expression, red blood cells.

Involved in oxygen transport from the lung to the various peripheral tissues. Its function is as follows. Hemopressin acts as an antagonist peptide of the cannabinoid receptor CNR1. Hemopressin-binding efficiently blocks cannabinoid receptor CNR1 and subsequent signaling. The sequence is that of Hemoglobin subunit alpha (HBA) from Martes foina (Beech marten).